The primary structure comprises 194 residues: dITP/XTP pyrophosphatase (194 aa).

8 to 13 (TKNKGK) contacts substrate. Mg(2+)-binding residues include Glu41 and Asp70. Asp70 functions as the Proton acceptor in the catalytic mechanism. Substrate-binding positions include Ser71, 153–156 (FGYD), Lys176, and 181–182 (HR).

It belongs to the HAM1 NTPase family. In terms of assembly, homodimer. Requires Mg(2+) as cofactor.

It carries out the reaction XTP + H2O = XMP + diphosphate + H(+). It catalyses the reaction dITP + H2O = dIMP + diphosphate + H(+). The enzyme catalyses ITP + H2O = IMP + diphosphate + H(+). Functionally, pyrophosphatase that catalyzes the hydrolysis of nucleoside triphosphates to their monophosphate derivatives, with a high preference for the non-canonical purine nucleotides XTP (xanthosine triphosphate), dITP (deoxyinosine triphosphate) and ITP. Seems to function as a house-cleaning enzyme that removes non-canonical purine nucleotides from the nucleotide pool, thus preventing their incorporation into DNA/RNA and avoiding chromosomal lesions. This Halalkalibacterium halodurans (strain ATCC BAA-125 / DSM 18197 / FERM 7344 / JCM 9153 / C-125) (Bacillus halodurans) protein is dITP/XTP pyrophosphatase.